Consider the following 263-residue polypeptide: 3-methyl-2-oxobutanoate hydroxymethyltransferase (263 aa).

Mg(2+) contacts are provided by aspartate 45 and aspartate 84. Residues 45-46, aspartate 84, and lysine 112 each bind 3-methyl-2-oxobutanoate; that span reads DS. Mg(2+) is bound at residue glutamate 114. Glutamate 181 acts as the Proton acceptor in catalysis.

It belongs to the PanB family. In terms of assembly, homodecamer; pentamer of dimers. The cofactor is Mg(2+).

It is found in the cytoplasm. It carries out the reaction 3-methyl-2-oxobutanoate + (6R)-5,10-methylene-5,6,7,8-tetrahydrofolate + H2O = 2-dehydropantoate + (6S)-5,6,7,8-tetrahydrofolate. It participates in cofactor biosynthesis; (R)-pantothenate biosynthesis; (R)-pantoate from 3-methyl-2-oxobutanoate: step 1/2. Catalyzes the reversible reaction in which hydroxymethyl group from 5,10-methylenetetrahydrofolate is transferred onto alpha-ketoisovalerate to form ketopantoate. The chain is 3-methyl-2-oxobutanoate hydroxymethyltransferase from Buchnera aphidicola subsp. Acyrthosiphon pisum (strain APS) (Acyrthosiphon pisum symbiotic bacterium).